Here is a 302-residue protein sequence, read N- to C-terminus: 4-hydroxy-tetrahydrodipicolinate synthase (302 aa).

Residue T46 participates in pyruvate binding. The active-site Proton donor/acceptor is Y135. Catalysis depends on K164, which acts as the Schiff-base intermediate with substrate. V206 is a pyruvate binding site.

This sequence belongs to the DapA family. As to quaternary structure, homotetramer; dimer of dimers.

It localises to the cytoplasm. It catalyses the reaction L-aspartate 4-semialdehyde + pyruvate = (2S,4S)-4-hydroxy-2,3,4,5-tetrahydrodipicolinate + H2O + H(+). It participates in amino-acid biosynthesis; L-lysine biosynthesis via DAP pathway; (S)-tetrahydrodipicolinate from L-aspartate: step 3/4. Its function is as follows. Catalyzes the condensation of (S)-aspartate-beta-semialdehyde [(S)-ASA] and pyruvate to 4-hydroxy-tetrahydrodipicolinate (HTPA). This chain is 4-hydroxy-tetrahydrodipicolinate synthase, found in Acidobacterium capsulatum (strain ATCC 51196 / DSM 11244 / BCRC 80197 / JCM 7670 / NBRC 15755 / NCIMB 13165 / 161).